Reading from the N-terminus, the 687-residue chain is Adhesion G-protein coupled receptor G1 (687 aa).

The signal sequence occupies residues 1-25; it reads MTAQSLLQMTLFLLSLLFLVQGAHG. Position 26-33 (26-33) interacts with heparin; that stretch reads RGHREDFR. Residues 26–402 lie on the Extracellular side of the membrane; it reads RGHREDFRFC…VEVDAVHKHY (377 aa). Intrachain disulfides connect Cys35/Cys91 and Cys121/Cys177. 3 N-linked (GlcNAc...) asparagine glycosylation sites follow: Asn39, Asn148, and Asn171. 190–200 provides a ligand contact to heparin; that stretch reads LKHPQKASRRP. In terms of domain architecture, GAIN-B spans 224 to 395; it reads DTVSFEEDRI…AVLMVSSVEV (172 aa). N-linked (GlcNAc...) asparagine glycans are attached at residues Asn234, Asn303, Asn324, and Asn341. 2 cysteine pairs are disulfide-bonded: Cys346-Cys377 and Cys366-Cys379. The interval 346–395 is GPS; sequence CVFWVEDPTLSSPGHWSSAGCETVRRETQTSCFCNHLTYFAVLMVSSVEV. The tract at residues 384–397 is stachel; that stretch reads YFAVLMVSSVEVDA. A helical membrane pass occupies residues 403–423; that stretch reads LSLLSYVGCVISALACVVTIA. Residues 424–442 are Cytoplasmic-facing; the sequence is AYLCSRRKPRDYTIKVHMN. The helical transmembrane segment at 443–463 threads the bilayer; it reads LLLAVFLLDMSFLLSEPVALT. The Extracellular segment spans residues 464-470; that stretch reads GSEAGCR. The chain crosses the membrane as a helical span at residues 471–491; it reads AGAIFLHFSLLACLSWMGLEG. Residues 492–512 are Cytoplasmic-facing; that stretch reads YNLYRLVVEVFGTYVPGYLLK. The helical transmembrane segment at 513-533 threads the bilayer; that stretch reads LSAMGWGFPIFLVTLVALVDV. The Extracellular portion of the chain corresponds to 534–570; it reads DNYGPIILAVHRTPESVIYPSMCWIRDSLVSYVTNLG. The chain crosses the membrane as a helical span at residues 571-591; that stretch reads LFSLVFLFNMAMLGTMVVQIL. The Cytoplasmic segment spans residues 592 to 603; that stretch reads RLRPHTQKWSHV. A helical membrane pass occupies residues 604–624; it reads LTLLGLSLVLGLPWALIFFSF. The Extracellular segment spans residues 625–630; that stretch reads ASGTFQ. The helical transmembrane segment at 631–651 threads the bilayer; sequence LVVLYLFSIITSFQGFLIFIW. The Cytoplasmic portion of the chain corresponds to 652–687; the sequence is YWSMRLQARGGPSPLKSNSDSARLPISSGSTSSSRI. Residues 664–687 form a disordered region; the sequence is SPLKSNSDSARLPISSGSTSSSRI. Residues 678–687 are compositionally biased toward low complexity; that stretch reads SSGSTSSSRI.

This sequence belongs to the G-protein coupled receptor 2 family. LN-TM7 subfamily. Heterodimer of 2 chains generated by proteolytic processing; the large extracellular N-terminal fragment (ADGRG1 NT) and the membrane-bound C-terminal fragment (ADGRG1-CT) predominantly remain associated and non-covalently linked. ADGRG1 NT self-associates in a trans-trans manner; the homophilic interaction enhances receptor signaling. Interacts with TGM2. Interacts with heparin; leading to the reduction of ADGRG1 shedding. Interacts with COL3A1. Part of a GPCR-tetraspanin complex at least consisting of ADGRG1, CD81, eventually CD9, and GNA11 in which CD81 is enhancing the association of ADGRG1 with GNA11. Post-translationally, autoproteolytically cleaved into 2 fragments; the large extracellular N-terminal fragment (ADGRG1 NT) and the membrane-bound C-terminal fragment (ADGRG1 CT) predominantly remain associated and non-covalently linked. Shedding to yield the secreted ADGRG1 N-terminal fragment seems to involve metalloprotease(s). In terms of processing, ubiquitinated. Undergoes polyubiquitination upon activation.

It localises to the cell membrane. Its subcellular location is the secreted. The protein resides in the membrane raft. With respect to regulation, forms a heterodimer of 2 chains generated by proteolytic processing that remain associated through non-covalent interactions mediated by the GAIN-B domain. In the inactivated receptor, the Stachel sequence (also named stalk) is embedded in the GAIN-B domain, where it adopts a beta-strand conformation. On activation, the Stachel moves into the 7 transmembrane region and adopts a twisted hook-shaped configuration that forms contacts within the receptor, leading to coupling of a G-alpha protein, which activates signaling. The cleaved GAIN-B and N-terminal domains can then dissociate from the rest of the receptor. Functionally, adhesion G-protein coupled receptor (aGPCR) for steroid hormone 17alpha-hydroxypregnenolone (17-OH), which is involved in cell adhesion and cell-cell interactions. Ligand binding causes a conformation change that triggers signaling via guanine nucleotide-binding proteins (G proteins) and modulates the activity of downstream effectors, such as RhoA pathway. ADGRG1 is coupled to G(12) and/or G(13) G proteins (GNA12 and GNA13, respectively) and mediates the activation Rho small GTPases. Acts as a potent suppressor of ferroptosis: binding to 17-OH-binding initiates signaling that down-regulates CD36 and alleviates ferroptosis-induced liver injury. Ligand-binding also induces cell adhesion activity via association with proteins such as collagen III/COL3A1 and TGM2. Mediates cell matrix adhesion in developing neurons and hematopoietic stem cells. Involved in cortical development, specifically in maintenance of the pial basement membrane integrity and in cortical lamination: association with COL3A1 in the developing brain inhibits neuronal migration via activation of the RhoA pathway. Together with TGM2, acts as a regulator of myelination and myelin repair in oligodendrocyte precursor cells. Acts as a hemostatic sensor of shear force: G protein-coupled receptor signaling is activated in response to shear force in platelets, promoting G(13) G protein signaling, and platelet shape change and aggregation in a COL3A1-dependent manner. Acts as an inhibitor of VEGFA production thereby inhibiting angiogenesis through a signaling pathway mediated by PRKCA. Plays a role in the maintenance of hematopoietic stem cells in bone marrow niche. Plays an essential role in testis development. In Pongo pygmaeus (Bornean orangutan), this protein is Adhesion G-protein coupled receptor G1 (ADGRG1).